A 307-amino-acid polypeptide reads, in one-letter code: Ribonuclease Z (307 aa).

7 residues coordinate Zn(2+): His-63, His-65, Asp-67, His-68, His-141, Asp-212, and His-270. The Proton acceptor role is filled by Asp-67.

This sequence belongs to the RNase Z family. As to quaternary structure, homodimer. Zn(2+) serves as cofactor.

The enzyme catalyses Endonucleolytic cleavage of RNA, removing extra 3' nucleotides from tRNA precursor, generating 3' termini of tRNAs. A 3'-hydroxy group is left at the tRNA terminus and a 5'-phosphoryl group is left at the trailer molecule.. Zinc phosphodiesterase, which displays some tRNA 3'-processing endonuclease activity. Probably involved in tRNA maturation, by removing a 3'-trailer from precursor tRNA. This chain is Ribonuclease Z, found in Bacillus cereus (strain ATCC 10987 / NRS 248).